Consider the following 610-residue polypeptide: MVWFKMMSAIEWAEKYRPRTLGDVVGNRKAVQDLRKWAEEWQSGIPEKRAVILYGPAGIGKTSSAHALAGDMEWEVIELNASDQRTAGVIEKIAGSAASMNTFFGGKRLIILDEADNLHGTADRGGMRAISGIIKSTLQPIILIANDIYGLTPTVRNICLEIKFGSVQSRSMVPALKKVCESEGVSCSQEAVLQIAENAGGDFRSAINDLQAAANGKKALEAEDISTAGRDVKENIFKAMQKIFKSTDCKRALESAYGLDESPEDLVHWIDENLPIQYARKDGDLEDIKTGFGYLSKADIYLGRVKKRQNYRMWRYASMLMVCGAALSKTRPYPGFIKYQQPSLWRRLGQTRSRRDMRDNIASKIGEHSFESMHYSRNNLLGFYSILLKDEASAVELTANLGLELEELMYLSGSAKVSKKLQKIYDEAQNLLETKRDRTEEQEFFKAPAPAADDKQATLHCPVNIPEKEGNASAEKPESPGPQSPERKQKTLDLGFDTPQKLPEKKRSSEMKLPENPEPAENNLFSLSEPLPEKGPIPDFAGKKSLPELEEEKPSLSPLKKMSPANKEASKQGVKQGASEKGSPAADTQGGMEDGSKKAEPKNQKTLFDF.

Residue 55 to 62 participates in ATP binding; sequence GPAGIGKT. 3 stretches are compositionally biased toward basic and acidic residues: residues 467–478, 502–515, and 594–603; these read EKEGNASAEKPE, LPEKKRSSEMKLPE, and DGSKKAEPKN. The segment at 467–610 is disordered; sequence EKEGNASAEK…PKNQKTLFDF (144 aa).

It belongs to the activator 1 small subunits family. RfcL subfamily. As to quaternary structure, heteromultimer composed of small subunits (RfcS) and large subunits (RfcL).

Its function is as follows. Part of the RFC clamp loader complex which loads the PCNA sliding clamp onto DNA. The chain is Replication factor C large subunit from Methanosarcina mazei (strain ATCC BAA-159 / DSM 3647 / Goe1 / Go1 / JCM 11833 / OCM 88) (Methanosarcina frisia).